We begin with the raw amino-acid sequence, 175 residues long: Apoptosis regulator Bcl-2 homolog (175 aa).

The segment at Lys37–Gly42 is mediates interaction with human NOP53 and localization to host nucleolus. The helical transmembrane segment at Met153 to Ser173 threads the bilayer.

It belongs to the Bcl-2 family. As to quaternary structure, interacts with human NOP53; may sequester ORF16 in host nucleolus and reduce its antiapoptotic activity. Interacts with ORF55.

It is found in the host membrane. The protein localises to the host mitochondrion. Its subcellular location is the host nucleus. The protein resides in the host nucleolus. Functionally, plays a role in the protection against apoptosis mediated by cytotoxic cells during the immune response to acute and persistent viral infection. Contributes therefore to latency establishment. Also plays a role in the inhibition of host starvation-induced autophagy which ultimately contributes to the viral chronic infection. Also participates in the viral genome replication within host nucleus. This is Apoptosis regulator Bcl-2 homolog (vBCL2) from Homo sapiens (Human).